A 331-amino-acid chain; its full sequence is Outer membrane lipoprotein PM1514 (331 aa).

Residues Met-1 to Ala-20 form the signal peptide. Residue Cys-21 is the site of N-palmitoyl cysteine attachment. A lipid anchor (S-diacylglycerol cysteine) is attached at Cys-21.

Its subcellular location is the cell outer membrane. The protein localises to the cell surface. This is Outer membrane lipoprotein PM1514 from Pasteurella multocida (strain Pm70).